We begin with the raw amino-acid sequence, 177 residues long: Translation initiation factor IF-3 (177 aa).

It belongs to the IF-3 family. As to quaternary structure, monomer.

Its subcellular location is the cytoplasm. In terms of biological role, IF-3 binds to the 30S ribosomal subunit and shifts the equilibrium between 70S ribosomes and their 50S and 30S subunits in favor of the free subunits, thus enhancing the availability of 30S subunits on which protein synthesis initiation begins. The sequence is that of Translation initiation factor IF-3 from Nitratiruptor sp. (strain SB155-2).